The sequence spans 279 residues: ATP synthase gamma chain (279 aa).

The protein belongs to the ATPase gamma chain family. As to quaternary structure, F-type ATPases have 2 components, CF(1) - the catalytic core - and CF(0) - the membrane proton channel. CF(1) has five subunits: alpha(3), beta(3), gamma(1), delta(1), epsilon(1). CF(0) has three main subunits: a, b and c.

It is found in the cell membrane. Functionally, produces ATP from ADP in the presence of a proton gradient across the membrane. The gamma chain is believed to be important in regulating ATPase activity and the flow of protons through the CF(0) complex. This chain is ATP synthase gamma chain, found in Mycoplasma pneumoniae (strain ATCC 29342 / M129 / Subtype 1) (Mycoplasmoides pneumoniae).